Reading from the N-terminus, the 42-residue chain is Serine protease inhibitor 8 (42 aa).

It belongs to the protease inhibitor I3 (leguminous Kunitz-type inhibitor) family. As to expression, cortex of potato tuber.

In terms of biological role, potent inhibitor of animal pancreatic trypsin (serine protease). The chain is Serine protease inhibitor 8 from Solanum tuberosum (Potato).